The primary structure comprises 222 residues: Deoxyribose-phosphate aldolase (222 aa).

Asp89 serves as the catalytic Proton donor/acceptor. Catalysis depends on Lys151, which acts as the Schiff-base intermediate with acetaldehyde. The active-site Proton donor/acceptor is the Lys180.

The protein belongs to the DeoC/FbaB aldolase family. DeoC type 1 subfamily.

It localises to the cytoplasm. It catalyses the reaction 2-deoxy-D-ribose 5-phosphate = D-glyceraldehyde 3-phosphate + acetaldehyde. The protein operates within carbohydrate degradation; 2-deoxy-D-ribose 1-phosphate degradation; D-glyceraldehyde 3-phosphate and acetaldehyde from 2-deoxy-alpha-D-ribose 1-phosphate: step 2/2. Its function is as follows. Catalyzes a reversible aldol reaction between acetaldehyde and D-glyceraldehyde 3-phosphate to generate 2-deoxy-D-ribose 5-phosphate. This Acholeplasma laidlawii (strain PG-8A) protein is Deoxyribose-phosphate aldolase.